Here is a 194-residue protein sequence, read N- to C-terminus: Probable RNA 2'-phosphotransferase (194 aa).

It belongs to the KptA/TPT1 family.

Its function is as follows. Removes the 2'-phosphate from RNA via an intermediate in which the phosphate is ADP-ribosylated by NAD followed by a presumed transesterification to release the RNA and generate ADP-ribose 1''-2''-cyclic phosphate (APPR&gt;P). May function as an ADP-ribosylase. The protein is Probable RNA 2'-phosphotransferase of Escherichia coli O45:K1 (strain S88 / ExPEC).